Here is a 112-residue protein sequence, read N- to C-terminus: Protein Tat (112 aa).

Residues 1-24 (MDPVDPEMPPWHHPGSKPQTPCNN) form an interaction with human CREBBP region. Positions 1-48 (MDPVDPEMPPWHHPGSKPQTPCNNCYCKRCCYHCYVCFTKKGLGISHG) are transactivation. Zn(2+)-binding residues include cysteine 22, cysteine 25, and cysteine 27. Residues 22 to 37 (CNNCYCKRCCYHCYVC) form a cysteine-rich region. Lysine 28 carries the N6-acetyllysine; by host PCAF modification. Cysteine 30, histidine 33, cysteine 34, and cysteine 37 together coordinate Zn(2+). Residues 38-48 (FTKKGLGISHG) are core. Positions 45 to 112 (ISHGRKKRRR…CNSCTRISGQ (68 aa)) are disordered. A Nuclear localization signal, RNA-binding (TAR), and protein transduction motif is present at residues 49–56 (RKKRRRPA). The segment at 49–82 (RKKRRRPAAAASYPDNKDPVPEQHTGRKQKRQEE) is interaction with the host capping enzyme RNGTT. Lysine 50 and lysine 51 each carry N6-acetyllysine; by host EP300 and GCN5L2. An asymmetric dimethylarginine; by host PRMT6 mark is found at arginine 52 and arginine 53. The span at 63–91 (DNKDPVPEQHTGRKQKRQEEQEKKVEKET) shows a compositional bias: basic and acidic residues. Polar residues predominate over residues 93–112 (PSGQPCHQDSCNSCTRISGQ).

Belongs to the lentiviruses Tat family. In terms of assembly, interacts with host CCNT1. Associates with the P-TEFb complex composed at least of Tat, P-TEFb (CDK9 and CCNT1), TAR RNA, RNA Pol II. Recruits the HATs CREBBP, TAF1/TFIID, EP300, PCAF and GCN5L2. Interacts with host KAT5/Tip60; this interaction targets the latter to degradation. Interacts with the host deacetylase SIRT1. Interacts with host capping enzyme RNGTT; this interaction stimulates RNGTT. Binds to host KDR, and to the host integrins ITGAV/ITGB3 and ITGA5/ITGB1. Interacts with host KPNB1/importin beta-1 without previous binding to KPNA1/importin alpha-1. Interacts with EIF2AK2. Interacts with host nucleosome assembly protein NAP1L1; this interaction may be required for the transport of Tat within the nucleus, since the two proteins interact at the nuclear rim. Interacts with host C1QBP/SF2P32; this interaction involves lysine-acetylated Tat. Interacts with the host chemokine receptors CCR2, CCR3 and CXCR4. Interacts with host DPP4/CD26; this interaction may trigger an anti-proliferative effect. Interacts with host LDLR. Interacts with the host extracellular matrix metalloproteinase MMP1. Interacts with host PRMT6; this interaction mediates Tat's methylation. Interacts with, and is ubiquitinated by MDM2/Hdm2. Interacts with host PSMC3 and HTATIP2. Interacts with STAB1; this interaction may overcome SATB1-mediated repression of IL2 and IL2RA (interleukin) in T cells by binding to the same domain than HDAC1. Interacts (when acetylated) with human CDK13, thereby increasing HIV-1 mRNA splicing and promoting the production of the doubly spliced HIV-1 protein Nef. Interacts with host TBP; this interaction modulates the activity of transcriptional pre-initiation complex. Interacts with host RELA. Interacts with host PLSCR1; this interaction negatively regulates Tat transactivation activity by altering its subcellular distribution. Post-translationally, asymmetrical arginine methylation by host PRMT6 seems to diminish the transactivation capacity of Tat and affects the interaction with host CCNT1. In terms of processing, acetylation by EP300, CREBBP, GCN5L2/GCN5 and PCAF regulates the transactivation activity of Tat. EP300-mediated acetylation of Lys-50 promotes dissociation of Tat from the TAR RNA through the competitive binding to PCAF's bromodomain. In addition, the non-acetylated Tat's N-terminus can also interact with PCAF. PCAF-mediated acetylation of Lys-28 enhances Tat's binding to CCNT1. Lys-50 is deacetylated by SIRT1. Polyubiquitination by host MDM2 does not target Tat to degradation, but activates its transactivation function and fosters interaction with CCNT1 and TAR RNA. Post-translationally, phosphorylated by EIF2AK2 on serine and threonine residues adjacent to the basic region important for TAR RNA binding and function. Phosphorylation of Tat by EIF2AK2 is dependent on the prior activation of EIF2AK2 by dsRNA.

It is found in the host nucleus. Its subcellular location is the host nucleolus. It localises to the host cytoplasm. The protein resides in the secreted. Transcriptional activator that increases RNA Pol II processivity, thereby increasing the level of full-length viral transcripts. Recognizes a hairpin structure at the 5'-LTR of the nascent viral mRNAs referred to as the transactivation responsive RNA element (TAR) and recruits the cyclin T1-CDK9 complex (P-TEFb complex) that will in turn hyperphosphorylate the RNA polymerase II to allow efficient elongation. The CDK9 component of P-TEFb and other Tat-activated kinases hyperphosphorylate the C-terminus of RNA Pol II that becomes stabilized and much more processive. Other factors such as HTATSF1/Tat-SF1, SUPT5H/SPT5, and HTATIP2 are also important for Tat's function. Besides its effect on RNA Pol II processivity, Tat induces chromatin remodeling of proviral genes by recruiting the histone acetyltransferases (HATs) CREBBP, EP300 and PCAF to the chromatin. This also contributes to the increase in proviral transcription rate, especially when the provirus integrates in transcriptionally silent region of the host genome. To ensure maximal activation of the LTR, Tat mediates nuclear translocation of NF-kappa-B by interacting with host RELA. Through its interaction with host TBP, Tat may also modulate transcription initiation. Tat can reactivate a latently infected cell by penetrating in it and transactivating its LTR promoter. In the cytoplasm, Tat is thought to act as a translational activator of HIV-1 mRNAs. Functionally, extracellular circulating Tat can be endocytosed by surrounding uninfected cells via the binding to several surface receptors such as CD26, CXCR4, heparan sulfate proteoglycans (HSPG) or LDLR. Neurons are rarely infected, but they internalize Tat via their LDLR. Through its interaction with nuclear HATs, Tat is potentially able to control the acetylation-dependent cellular gene expression. Modulates the expression of many cellular genes involved in cell survival, proliferation or in coding for cytokines or cytokine receptors. Tat plays a role in T-cell and neurons apoptosis. Tat induced neurotoxicity and apoptosis probably contribute to neuroAIDS. Circulating Tat also acts as a chemokine-like and/or growth factor-like molecule that binds to specific receptors on the surface of the cells, affecting many cellular pathways. In the vascular system, Tat binds to ITGAV/ITGB3 and ITGA5/ITGB1 integrins dimers at the surface of endothelial cells and competes with bFGF for heparin-binding sites, leading to an excess of soluble bFGF. The chain is Protein Tat from Homo sapiens (Human).